The chain runs to 333 residues: Flotillin-like protein FloA (333 aa).

2 helical membrane passes run 8-28 and 30-50; these read LMPI…FTFI and VGLW…TLVG.

The protein belongs to the flotillin-like FloA family. As to quaternary structure, homooligomerizes.

Its subcellular location is the cell membrane. The protein resides in the membrane raft. Functionally, found in functional membrane microdomains (FMM) that may be equivalent to eukaryotic membrane rafts. FMMs are highly dynamic and increase in number as cells age. Flotillins are thought to be important factors in membrane fluidity. In Desulfitobacterium hafniense (strain DSM 10664 / DCB-2), this protein is Flotillin-like protein FloA.